Consider the following 1014-residue polypeptide: UvrABC system protein A (1014 aa).

32–39 (GLSGSGKS) contacts ATP. ABC transporter domains lie at 314-592 (WSHG…AESQ) and 612-941 (QDPS…KFLR). ATP is bound at residue 645–652 (GVSGSGKS). A C4-type zinc finger spans residues 744–770 (CENCAGDGTIKIEMNFLPDVYVPCEVC). The segment covering 976–995 (TKTVTGTAAKKATATRTAKT) has biased composition (low complexity). Positions 976 to 1014 (TKTVTGTAAKKATATRTAKTAVKKAAKPAAKKTTRTSKA) are disordered. Over residues 996–1014 (AVKKAAKPAAKKTTRTSKA) the composition is skewed to basic residues.

It belongs to the ABC transporter superfamily. UvrA family. Forms a heterotetramer with UvrB during the search for lesions.

Its subcellular location is the cytoplasm. In terms of biological role, the UvrABC repair system catalyzes the recognition and processing of DNA lesions. UvrA is an ATPase and a DNA-binding protein. A damage recognition complex composed of 2 UvrA and 2 UvrB subunits scans DNA for abnormalities. When the presence of a lesion has been verified by UvrB, the UvrA molecules dissociate. The protein is UvrABC system protein A of Streptomyces coelicolor (strain ATCC BAA-471 / A3(2) / M145).